The chain runs to 341 residues: N-acetyl-gamma-glutamyl-phosphate reductase (341 aa).

The active site involves Cys146.

The protein belongs to the NAGSA dehydrogenase family. Type 1 subfamily.

It localises to the cytoplasm. It carries out the reaction N-acetyl-L-glutamate 5-semialdehyde + phosphate + NADP(+) = N-acetyl-L-glutamyl 5-phosphate + NADPH + H(+). Its pathway is amino-acid biosynthesis; L-arginine biosynthesis; N(2)-acetyl-L-ornithine from L-glutamate: step 3/4. Catalyzes the NADPH-dependent reduction of N-acetyl-5-glutamyl phosphate to yield N-acetyl-L-glutamate 5-semialdehyde. The polypeptide is N-acetyl-gamma-glutamyl-phosphate reductase (Limosilactobacillus fermentum (strain NBRC 3956 / LMG 18251) (Lactobacillus fermentum)).